The following is a 482-amino-acid chain: Ribosomal protein S6 kinase beta-2 (482 aa).

The tract at residues 1–26 (MAAVFDLDLETEEGSEGEGEPELSPA) is disordered. Positions 7 to 21 (LDLETEEGSEGEGEP) are enriched in acidic residues. Ser15 is modified (phosphoserine). Positions 67 to 328 (FELLRVLGKG…AADVQRHPFF (262 aa)) constitute a Protein kinase domain. ATP is bound by residues 73 to 81 (LGKGGYGKV) and Lys99. Asp194 acts as the Proton acceptor in catalysis. An AGC-kinase C-terminal domain is found at 329–399 (RHMNWDDLLA…VAPSVLDSIK (71 aa)). The disordered stretch occupies residues 407-482 (KLRSPRRLNS…SKRGRGRPGR (76 aa)). Phosphoserine is present on residues Ser417 and Ser423. Residues 437–466 (PSLPEPTELPLPPLLPPPPPSTTAPLPIRP) show a composition bias toward pro residues. A Nuclear localization signal motif is present at residues 471–477 (KKSKRGR). The span at 471-482 (KKSKRGRGRPGR) shows a compositional bias: basic residues. Ser473 carries the post-translational modification Phosphoserine; by PKC.

This sequence belongs to the protein kinase superfamily. AGC Ser/Thr protein kinase family. S6 kinase subfamily. Phosphorylated and activated by MTOR. Phosphorylation by PKC within the NLS in response to mitogenic stimuli causes cytoplasmic retention.

Its subcellular location is the cytoplasm. It is found in the nucleus. It catalyses the reaction L-seryl-[protein] + ATP = O-phospho-L-seryl-[protein] + ADP + H(+). The catalysed reaction is L-threonyl-[protein] + ATP = O-phospho-L-threonyl-[protein] + ADP + H(+). Phosphorylates specifically ribosomal protein S6. Seems to act downstream of mTOR signaling in response to growth factors and nutrients to promote cell proliferation, cell growth and cell cycle progression in an alternative pathway regulated by MEAK7. This chain is Ribosomal protein S6 kinase beta-2 (RPS6KB2), found in Homo sapiens (Human).